We begin with the raw amino-acid sequence, 213 residues long: Octanoyltransferase (213 aa).

In terms of domain architecture, BPL/LPL catalytic spans 32–207; that stretch reads ESTLDEIWLV…NILALLNNPD (176 aa). Substrate-binding positions include 71 to 78, 138 to 140, and 151 to 153; these read RGGQVTYH, SLG, and GLA. C169 functions as the Acyl-thioester intermediate in the catalytic mechanism.

The protein belongs to the LipB family.

It is found in the cytoplasm. It carries out the reaction octanoyl-[ACP] + L-lysyl-[protein] = N(6)-octanoyl-L-lysyl-[protein] + holo-[ACP] + H(+). It functions in the pathway protein modification; protein lipoylation via endogenous pathway; protein N(6)-(lipoyl)lysine from octanoyl-[acyl-carrier-protein]: step 1/2. In terms of biological role, catalyzes the transfer of endogenously produced octanoic acid from octanoyl-acyl-carrier-protein onto the lipoyl domains of lipoate-dependent enzymes. Lipoyl-ACP can also act as a substrate although octanoyl-ACP is likely to be the physiological substrate. This Escherichia coli O17:K52:H18 (strain UMN026 / ExPEC) protein is Octanoyltransferase.